Reading from the N-terminus, the 336-residue chain is Glyceraldehyde-3-phosphate dehydrogenase (336 aa).

NAD(+) contacts are provided by residues 12–13 (RI), aspartate 34, arginine 78, and threonine 121. D-glyceraldehyde 3-phosphate is bound by residues 151-153 (SCT), threonine 182, arginine 199, 212-213 (TG), and arginine 235. Cysteine 152 serves as the catalytic Nucleophile. Residue asparagine 316 participates in NAD(+) binding.

Belongs to the glyceraldehyde-3-phosphate dehydrogenase family. As to quaternary structure, homotetramer.

The protein resides in the cytoplasm. The enzyme catalyses D-glyceraldehyde 3-phosphate + phosphate + NAD(+) = (2R)-3-phospho-glyceroyl phosphate + NADH + H(+). It participates in carbohydrate degradation; glycolysis; pyruvate from D-glyceraldehyde 3-phosphate: step 1/5. In terms of biological role, catalyzes the oxidative phosphorylation of glyceraldehyde 3-phosphate (G3P) to 1,3-bisphosphoglycerate (BPG) using the cofactor NAD. The first reaction step involves the formation of a hemiacetal intermediate between G3P and a cysteine residue, and this hemiacetal intermediate is then oxidized to a thioester, with concomitant reduction of NAD to NADH. The reduced NADH is then exchanged with the second NAD, and the thioester is attacked by a nucleophilic inorganic phosphate to produce BPG. The polypeptide is Glyceraldehyde-3-phosphate dehydrogenase (gap) (Streptococcus pyogenes serotype M3 (strain ATCC BAA-595 / MGAS315)).